We begin with the raw amino-acid sequence, 347 residues long: MAQELAAPLSCGQPPGQNITETTTDPWDEGDLRFEPSNSMVHSFSSSSESNLSLSVGYFPCEDTLSCEDTLSCEDSSSEGPSMHFVPPIQGSWRTENTGRLLARRDQIQDDPEQFCKLSITLAWDVDMASNNSDSTTNCDLSGDNKDKHPKEKTQLTLSKLDGLVQKLEKFLENQKDDKDDDSVFPESAQEEDSQLPSSSLPGMAQVSHQEYGSCQDLAKFNPLENEDVNQFPQIHPRLQNQELAKIISKATGSQGTDIAEISSVLPGPPEKEDTHSSTGALSCLNFRWVFRWLRPQVRSSLLGREDPREANERPRELARKKRFSYRSKRIQPQESFELGHPIPPDF.

5 disordered regions span residues 1–40, 72–92, 133–158, 173–209, and 306–347; these read MAQE…SNSM, SCED…IQGS, SDST…QLTL, ENQK…QVSH, and EDPR…PPDF. Residues 15–25 show a composition bias toward polar residues; that stretch reads PGQNITETTTD. The span at 143-154 shows a compositional bias: basic and acidic residues; the sequence is GDNKDKHPKEKT. Over residues 179–194 the composition is skewed to acidic residues; it reads KDDDSVFPESAQEEDS. Over residues 195–209 the composition is skewed to polar residues; the sequence is QLPSSSLPGMAQVSH. A compositionally biased stretch (basic and acidic residues) spans 306 to 318; the sequence is EDPREANERPREL. Residues 319–330 show a composition bias toward basic residues; that stretch reads ARKKRFSYRSKR.

This is an uncharacterized protein from Bos taurus (Bovine).